Reading from the N-terminus, the 316-residue chain is Sideroflexin-4 (316 aa).

A run of 5 helical transmembrane segments spans residues 83-103 (QVFLPISAPLVVGSLIAHKGI), 141-161 (LLILGAVSYSTVTGALPQIIL), 174-194 (ICRSFLPVPLAAGLAAFNILV), 230-250 (ISRATLFGTTAALPTFLMALL), and 263-283 (IAPIGSMCTVITFGLMIPVSF).

It belongs to the sideroflexin family.

Its subcellular location is the mitochondrion inner membrane. Functionally, mitochondrial amino-acid transporter. Does not act as a serine transporter: not able to mediate transport of serine into mitochondria. The sequence is that of Sideroflexin-4 from Danio rerio (Zebrafish).